The following is a 540-amino-acid chain: Ipecac alkaloid beta-glucosidase 9 (540 aa).

Residues Q36, H140, 185–186 (NE), Y350, E421, W470, and F486 each bind a beta-D-glucoside. Residue E186 is the Proton donor of the active site. E421 (nucleophile) is an active-site residue.

This sequence belongs to the glycosyl hydrolase 1 family.

Its subcellular location is the cytoplasm. The protein localises to the cytosol. It catalyses the reaction deacetylipecoside + H2O = deacetylipecoside aglycone + D-glucose. The catalysed reaction is deacetylisoipecoside + H2O = deacetylisoipecoside aglycone + D-glucose. It functions in the pathway alkaloid biosynthesis. In terms of biological role, beta-glucosidase catalyzing deglucosylation on N-deacetylisoipecoside and N-deacetylipecoside. This Carapichea ipecacuanha (Ipecac) protein is Ipecac alkaloid beta-glucosidase 9.